The following is a 359-amino-acid chain: Beta-1,3-galactosyltransferase bre-2 (359 aa).

Topologically, residues 1 to 11 (MRQSRRASSRV) are cytoplasmic. Residues 12–29 (NRLVVIFIIVASGFLLLY) form a helical; Signal-anchor for type II membrane protein membrane-spanning segment. Over 30 to 359 (KNTQQFTQID…NPDLEELKEK (330 aa)) the chain is Lumenal. N-linked (GlcNAc...) asparagine glycosylation is found at N73, N163, and N209.

It belongs to the glycosyltransferase 31 family.

It localises to the golgi apparatus membrane. It functions in the pathway protein modification; protein glycosylation. Its function is as follows. Transfers N-acetylgalactosamine onto carbohydrate substrates. Involved in susceptibility to pore-forming crystal toxins in conjunction with bre-1, bre-3, bre-4, and bre-5. Involved in resistance to the nematotoxic C.cinerea galectin Cgl2. The chain is Beta-1,3-galactosyltransferase bre-2 from Caenorhabditis elegans.